We begin with the raw amino-acid sequence, 288 residues long: ATP synthase gamma chain (288 aa).

The protein belongs to the ATPase gamma chain family. As to quaternary structure, F-type ATPases have 2 components, CF(1) - the catalytic core - and CF(0) - the membrane proton channel. CF(1) has five subunits: alpha(3), beta(3), gamma(1), delta(1), epsilon(1). CF(0) has three main subunits: a, b and c.

The protein localises to the cell inner membrane. Its function is as follows. Produces ATP from ADP in the presence of a proton gradient across the membrane. The gamma chain is believed to be important in regulating ATPase activity and the flow of protons through the CF(0) complex. This Stutzerimonas stutzeri (strain A1501) (Pseudomonas stutzeri) protein is ATP synthase gamma chain.